Here is a 356-residue protein sequence, read N- to C-terminus: Cyclin-D2-2 (356 aa).

The segment covering 325–343 has biased composition (polar residues); sequence LGSSQSNSNNKDYNSQDSA. Residues 325 to 356 form a disordered region; sequence LGSSQSNSNNKDYNSQDSAPASKRRRLNTTPI. Basic residues predominate over residues 346–356; sequence SKRRRLNTTPI.

This sequence belongs to the cyclin family. Cyclin D subfamily.

This chain is Cyclin-D2-2 (CYCD2-2), found in Oryza sativa subsp. japonica (Rice).